Consider the following 301-residue polypeptide: Porphobilinogen deaminase (301 aa).

Residue Cys-235 is modified to S-(dipyrrolylmethanemethyl)cysteine.

The protein belongs to the HMBS family. In terms of assembly, monomer. The cofactor is dipyrromethane.

The catalysed reaction is 4 porphobilinogen + H2O = hydroxymethylbilane + 4 NH4(+). It participates in porphyrin-containing compound metabolism; protoporphyrin-IX biosynthesis; coproporphyrinogen-III from 5-aminolevulinate: step 2/4. Functionally, tetrapolymerization of the monopyrrole PBG into the hydroxymethylbilane pre-uroporphyrinogen in several discrete steps. The polypeptide is Porphobilinogen deaminase (Thermus thermophilus (strain ATCC BAA-163 / DSM 7039 / HB27)).